A 183-amino-acid chain; its full sequence is Shikimate kinase (183 aa).

19–24 (GAGKTT) provides a ligand contact to ATP. Thr23 provides a ligand contact to Mg(2+). Substrate-binding residues include Asp41, Arg65, and Gly87. Arg124 contacts ATP. Arg143 contacts substrate.

Belongs to the shikimate kinase family. In terms of assembly, monomer. Mg(2+) is required as a cofactor.

It localises to the cytoplasm. The enzyme catalyses shikimate + ATP = 3-phosphoshikimate + ADP + H(+). Its pathway is metabolic intermediate biosynthesis; chorismate biosynthesis; chorismate from D-erythrose 4-phosphate and phosphoenolpyruvate: step 5/7. Its function is as follows. Catalyzes the specific phosphorylation of the 3-hydroxyl group of shikimic acid using ATP as a cosubstrate. In Thermosynechococcus vestitus (strain NIES-2133 / IAM M-273 / BP-1), this protein is Shikimate kinase.